Reading from the N-terminus, the 178-residue chain is Photosystem I assembly protein Ycf4 (178 aa).

The next 2 helical transmembrane spans lie at 19–39 and 61–81; these read ILVA…SLSS and LVMG…WAVI.

Belongs to the Ycf4 family.

Its subcellular location is the cellular thylakoid membrane. Seems to be required for the assembly of the photosystem I complex. This Synechococcus sp. (strain WH7803) protein is Photosystem I assembly protein Ycf4.